A 267-amino-acid chain; its full sequence is Undecaprenyl-diphosphatase 2 (267 aa).

Transmembrane regions (helical) follow at residues Ile4 to Ile24, Glu43 to Phe63, Phe84 to His104, Val109 to Trp129, Ile147 to Thr167, Ala186 to Asp206, Ile219 to Ala239, and Phe243 to Ile263.

Belongs to the UppP family.

Its subcellular location is the cell inner membrane. The catalysed reaction is di-trans,octa-cis-undecaprenyl diphosphate + H2O = di-trans,octa-cis-undecaprenyl phosphate + phosphate + H(+). Its function is as follows. Catalyzes the dephosphorylation of undecaprenyl diphosphate (UPP). Confers resistance to bacitracin. The protein is Undecaprenyl-diphosphatase 2 of Shewanella oneidensis (strain ATCC 700550 / JCM 31522 / CIP 106686 / LMG 19005 / NCIMB 14063 / MR-1).